The primary structure comprises 183 residues: Nodulation protein L (183 aa).

This sequence belongs to the transferase hexapeptide repeat family.

Its function is as follows. Acetyltransferase implicated in the O-acetylation of Nod factors. This chain is Nodulation protein L (nodL), found in Rhizobium meliloti (strain 1021) (Ensifer meliloti).